The sequence spans 223 residues: Guanylate kinase (223 aa).

Residues Gly6–Thr183 form the Guanylate kinase-like domain. Gly13–Gly20 lines the ATP pocket.

The protein belongs to the guanylate kinase family.

Its subcellular location is the cytoplasm. The catalysed reaction is GMP + ATP = GDP + ADP. Essential for recycling GMP and indirectly, cGMP. This chain is Guanylate kinase, found in Thermus thermophilus (strain ATCC 27634 / DSM 579 / HB8).